The primary structure comprises 314 residues: Serine/threonine-protein phosphatase PP-Y (314 aa).

The Mn(2+) site is built by Asp60, His62, Asp88, and Asn120. The active-site Proton donor is His121. Positions 169 and 244 each coordinate Mn(2+).

The protein belongs to the PPP phosphatase family. PP-Y subfamily. Requires Mn(2+) as cofactor.

It catalyses the reaction O-phospho-L-seryl-[protein] + H2O = L-seryl-[protein] + phosphate. The enzyme catalyses O-phospho-L-threonyl-[protein] + H2O = L-threonyl-[protein] + phosphate. This chain is Serine/threonine-protein phosphatase PP-Y (PpY-55A), found in Drosophila melanogaster (Fruit fly).